A 358-amino-acid chain; its full sequence is MKDVLDDNLLEEPAAQYSLFEPESNPNLREKFTFIDLFAGIGGFRIAMQNLGGKCIFSSEWDEQAQKTYEANFGDLPYGDITLEETKAFIPEKFDILCAGFPCQAFSIAGKRGGFEDTRGTLFFDVAEIIRRHQPKAFFLENVKGLKNHDKGRTLKTILNVLREDLGYFVPEPAIVNAKNFGVPQNRERIYIVGFHKSTGVNSFSYPEPLDKIVTFADIREEKTVPTKYYLSTQYIDTLRKHKERHESKGNGFGYEIIPDDGIANAIVVGGMGRERNLVIDHRITDFTPTTNIKGEVNREGIRKMTPREWARLQGFPDSYVIPVSDASAYKQFGNSVAVPAIQATGKKILEKLGNLYD.

An SAM-dependent MTase C5-type domain is found at 32–356; it reads FTFIDLFAGI…KKILEKLGNL (325 aa). Residue Cys-103 is part of the active site.

It belongs to the class I-like SAM-binding methyltransferase superfamily. C5-methyltransferase family. In terms of assembly, monomer.

The catalysed reaction is a 2'-deoxycytidine in DNA + S-adenosyl-L-methionine = a 5-methyl-2'-deoxycytidine in DNA + S-adenosyl-L-homocysteine + H(+). Functionally, a methylase that recognizes the double-stranded sequence 5'-CCGG-3', methylates C-2 on both strands, and protects the DNA from cleavage by the HpaII endonuclease. This chain is Type II methyltransferase M.HpaII, found in Haemophilus parainfluenzae.